Consider the following 291-residue polypeptide: MDSRVSSPEKQDKENFVGVNNKRLGVCGWILFSLSFLLVIITFPISIWMCLKIIKEYERAVVFRLGRIQADKAKGPGLILVLPCIDVFVKVDLRTVTCNIPPQEILTRDSVTTQVDGVVYYRIYSAVSAVANVNDVHQATFLLAQTTLRNVLGTQTLSQILAGREEIAHSIQTLLDDATELWGIRVARVEIKDVRIPVQLQRSMAAEAEATREARAKVLAAEGEMNASKSLKSASMVLAESPIALQLRYLQTLSTVATEKNSTIVFPLPMNILEGIGGVSYDNHKKLPNKA.

Serine 7 bears the Phosphoserine mark. The helical; Signal-anchor for type III membrane protein transmembrane segment at 29-49 (WILFSLSFLLVIITFPISIWM) threads the bilayer. Topologically, residues 50–291 (CLKIIKEYER…DNHKKLPNKA (242 aa)) are cytoplasmic. Serine 241 bears the Phosphoserine mark.

The protein belongs to the band 7/mec-2 family. Homodimer. Interacts with PIEZO1 and PIEZO2.

The protein resides in the cell membrane. Its function is as follows. Required for the function of many mechanoreceptors. Modulate mechanotransduction channels and acid-sensing ion channels (ASIC) proteins. Potentiates PIEZO1 and PIEZO2 function by increasing their sensitivity to mechanical stimulations. The chain is Stomatin-like protein 3 (STOML3) from Homo sapiens (Human).